We begin with the raw amino-acid sequence, 386 residues long: CRISPR system endoribonuclease Csm6' (386 aa).

The CARF domain stretch occupies residues 1–146; the sequence is MRVLISAVGD…ASNENIGHDN (146 aa). Positions 147–386 are HEPN domain; it reads DENIDELIEV…LNKILLTKLN (240 aa).

Belongs to the CRISPR-associated Csm6 family. As to quaternary structure, homodimer. The composite ssRNase active site is formed at the dimer interface.

With respect to regulation, non-specific ssRNase activity is stimulated about 1000-fold by cyclic oligoadenylate (cOA), a second messenger produced by Cas10 of the ternary Csm effector complex in the presence of a cognate target RNA. Its function is as follows. CRISPR (clustered regularly interspaced short palindromic repeat) is an adaptive immune system that provides protection against mobile genetic elements (viruses, transposable elements and conjugative plasmids). CRISPR clusters contain spacers, sequences complementary to antecedent mobile elements, and target invading nucleic acids. CRISPR clusters are transcribed and processed into CRISPR RNA (crRNA). The type III-A Csm complex binds crRNA and acts as a crRNA-guided RNase, DNase and cyclic oligoadenylate synthase; binding of target RNA cognate to the crRNA is required for all activities. In a heterologous host this Csm effector complex restricts ssRNA phage MS2, suggesting it may target RNA viruses in vivo. This protein is not part of the Csm complex. In terms of biological role, csm functions as a non-specific ssDNase. Base-pairing between crRNA and target RNA to form a ternary Csm complex activates a ssDNase activity; target RNA cleavage suppresses the ssDNase, a temporal control that prevents uncontrolled DNA degradation. Viral RNA transcripts probably tether the Csm complex to the viral genome, recruiting Cas10 ssDNA activity which is able to degrade DNA in the transcription bubble, spatially controlling the DNase activity. A single-strand-specific endoribonuclease (ssRNase) that is approximately 1000-fold stimulated by cyclic oligoadenylate (cOA); although several species of cOA are synthesized by this organism only cyclic hexaadenylate (cA6) stimulates the ssRNase activity. Cleaves preferentially within GA or AA dinucleotides, although the presence of cA6 broadens the preference. The polypeptide is CRISPR system endoribonuclease Csm6' (Streptococcus thermophilus).